The following is a 767-amino-acid chain: 5-methyltetrahydropteroyltriglutamate--homocysteine methyltransferase (767 aa).

5-methyltetrahydropteroyltri-L-glutamate is bound by residues 16 to 19 (RELK) and K122. Residues 443–445 (IGS) and E496 contribute to the L-homocysteine site. L-methionine is bound by residues 443 to 445 (IGS) and E496. Residues 527–528 (RC) and W573 each bind 5-methyltetrahydropteroyltri-L-glutamate. D611 contributes to the L-homocysteine binding site. D611 is a binding site for L-methionine. 5-methyltetrahydropteroyltri-L-glutamate is bound at residue E617. Positions 653, 655, and 677 each coordinate Zn(2+). Residue H706 is the Proton donor of the active site. Residue C738 coordinates Zn(2+).

It belongs to the vitamin-B12 independent methionine synthase family. It depends on Zn(2+) as a cofactor.

It carries out the reaction 5-methyltetrahydropteroyltri-L-glutamate + L-homocysteine = tetrahydropteroyltri-L-glutamate + L-methionine. The protein operates within amino-acid biosynthesis; L-methionine biosynthesis via de novo pathway; L-methionine from L-homocysteine (MetE route): step 1/1. Functionally, catalyzes the transfer of a methyl group from 5-methyltetrahydrofolate to homocysteine resulting in methionine formation. This Ectopseudomonas mendocina (strain ymp) (Pseudomonas mendocina) protein is 5-methyltetrahydropteroyltriglutamate--homocysteine methyltransferase.